The sequence spans 249 residues: Proteasome activator complex subunit 1 (249 aa).

The tract at residues 60–102 (PLDIPVPDPVKEKEKEERKKQQEKEDKDEKKKGEDEDKGPPCG) is disordered. Basic and acidic residues predominate over residues 68–98 (PVKEKEKEERKKQQEKEDKDEKKKGEDEDKG).

The protein belongs to the PA28 family. Heterodimer of PSME1 and PSME2, which forms a hexameric ring. PSME1 can form homoheptamers.

Implicated in immunoproteasome assembly and required for efficient antigen processing. The PA28 activator complex enhances the generation of class I binding peptides by altering the cleavage pattern of the proteasome. The sequence is that of Proteasome activator complex subunit 1 (PSME1) from Homo sapiens (Human).